Here is a 508-residue protein sequence, read N- to C-terminus: Glycerol kinase (508 aa).

Position 14 (Thr-14) interacts with ADP. The ATP site is built by Thr-14, Thr-15, and Ser-16. Thr-14 is a binding site for sn-glycerol 3-phosphate. Arg-18 is a binding site for ADP. Arg-84, Glu-85, and Tyr-136 together coordinate sn-glycerol 3-phosphate. Arg-84, Glu-85, and Tyr-136 together coordinate glycerol. A Phosphohistidine; by HPr modification is found at His-232. A sn-glycerol 3-phosphate-binding site is contributed by Asp-246. Glycerol-binding residues include Asp-246 and Gln-247. Thr-268 and Gly-311 together coordinate ADP. Positions 268, 311, 315, and 412 each coordinate ATP. The ADP site is built by Gly-412 and Asn-416.

This sequence belongs to the FGGY kinase family. As to quaternary structure, homotetramer and homodimer (in equilibrium). Post-translationally, the phosphoenolpyruvate-dependent sugar phosphotransferase system (PTS), including enzyme I, and histidine-containing protein (HPr) are required for the phosphorylation, which leads to the activation of the enzyme.

The enzyme catalyses glycerol + ATP = sn-glycerol 3-phosphate + ADP + H(+). Its pathway is polyol metabolism; glycerol degradation via glycerol kinase pathway; sn-glycerol 3-phosphate from glycerol: step 1/1. With respect to regulation, activated by phosphorylation and inhibited by fructose 1,6-bisphosphate (FBP). Key enzyme in the regulation of glycerol uptake and metabolism. Catalyzes the phosphorylation of glycerol to yield sn-glycerol 3-phosphate. The chain is Glycerol kinase from Streptococcus pyogenes serotype M4 (strain MGAS10750).